The chain runs to 100 residues: Large ribosomal subunit protein uL23 (100 aa).

The protein belongs to the universal ribosomal protein uL23 family. Part of the 50S ribosomal subunit. Contacts protein L29, and trigger factor when it is bound to the ribosome.

Its function is as follows. One of the early assembly proteins it binds 23S rRNA. One of the proteins that surrounds the polypeptide exit tunnel on the outside of the ribosome. Forms the main docking site for trigger factor binding to the ribosome. The protein is Large ribosomal subunit protein uL23 of Prochlorococcus marinus (strain MIT 9312).